A 353-amino-acid chain; its full sequence is Ornithine racemase (353 aa).

Catalysis depends on K35, which acts as the Proton acceptor. K35 carries the post-translational modification N6-(pyridoxal phosphate)lysine. R128 contacts substrate.

It belongs to the alanine racemase family. Homodimer. Requires pyridoxal 5'-phosphate as cofactor.

It carries out the reaction L-ornithine = D-ornithine. Involved in the ornithine fermentation pathway. Catalyzes the conversion of L-ornithine to D-ornithine. OR could also racemize basic amino acids such as lysine and arginine. Serine, asparagine and alanine could be also converted by OR, but at a lower rate. In Acetoanaerobium sticklandii (strain ATCC 12662 / DSM 519 / JCM 1433 / CCUG 9281 / NCIMB 10654 / HF) (Clostridium sticklandii), this protein is Ornithine racemase.